We begin with the raw amino-acid sequence, 886 residues long: Alanine--tRNA ligase (886 aa).

4 residues coordinate Zn(2+): His-564, His-568, Cys-666, and His-670.

This sequence belongs to the class-II aminoacyl-tRNA synthetase family. Zn(2+) is required as a cofactor.

Its subcellular location is the cytoplasm. It catalyses the reaction tRNA(Ala) + L-alanine + ATP = L-alanyl-tRNA(Ala) + AMP + diphosphate. Functionally, catalyzes the attachment of alanine to tRNA(Ala) in a two-step reaction: alanine is first activated by ATP to form Ala-AMP and then transferred to the acceptor end of tRNA(Ala). Also edits incorrectly charged Ser-tRNA(Ala) and Gly-tRNA(Ala) via its editing domain. In Prochlorococcus marinus (strain MIT 9312), this protein is Alanine--tRNA ligase.